Consider the following 509-residue polypeptide: Heat shock 70 kDa protein 14 (509 aa).

Belongs to the heat shock protein 70 family. As to quaternary structure, component of ribosome-associated complex (RAC), a heterodimer composed of Hsp70/DnaK-type chaperone HSPA14 and Hsp40/DnaJ-type chaperone DNAJC2.

It is found in the cytoplasm. The protein resides in the cytosol. In terms of biological role, component of the ribosome-associated complex (RAC), a complex involved in folding or maintaining nascent polypeptides in a folding-competent state. In the RAC complex, binds to the nascent polypeptide chain, while DNAJC2 stimulates its ATPase activity. The sequence is that of Heat shock 70 kDa protein 14 (HSPA14) from Pongo abelii (Sumatran orangutan).